Here is an 896-residue protein sequence, read N- to C-terminus: Rho GTPase-activating protein gacM (896 aa).

Positions 1-97 are disordered; that stretch reads MSSFIGWKKN…SSNDTIGKSS (97 aa). Low complexity predominate over residues 10 to 26; sequence NSNSGGTPGASPTSSSP. Residues 27 to 38 show a composition bias toward polar residues; sequence LNSTISNANSVS. Low complexity-rich tracts occupy residues 45–57 and 65–97; these read SISN…LSSS and NSNN…GKSS. The Rho-GAP domain occupies 139-330; it reads QPINPNTEFG…LWIEEFDMIS (192 aa). Low complexity-rich tracts occupy residues 375–391, 400–427, 448–460, and 473–506; these read IQQQ…QSHP, SSLS…LLPT, PTPT…TPQT, and NNNS…NNNN. Disordered stretches follow at residues 375–514 and 701–770; these read IQQQ…GSPL and LPTG…ENQI. Polar residues predominate over residues 702 to 711; that stretch reads PTGSSWSDFE. Low complexity-rich tracts occupy residues 712–743 and 751–761; these read NNSS…NSSP and SNGLNSSSNSN.

The protein resides in the cytoplasm. In terms of biological role, rho GTPase-activating protein involved in the signal transduction pathway. The chain is Rho GTPase-activating protein gacM (gacM) from Dictyostelium discoideum (Social amoeba).